The primary structure comprises 498 residues: Lysine--tRNA ligase (498 aa).

Mg(2+)-binding residues include Glu407 and Glu414.

The protein belongs to the class-II aminoacyl-tRNA synthetase family. Homodimer. Mg(2+) is required as a cofactor.

Its subcellular location is the cytoplasm. The enzyme catalyses tRNA(Lys) + L-lysine + ATP = L-lysyl-tRNA(Lys) + AMP + diphosphate. The polypeptide is Lysine--tRNA ligase (Rhizobium johnstonii (strain DSM 114642 / LMG 32736 / 3841) (Rhizobium leguminosarum bv. viciae)).